Consider the following 115-residue polypeptide: Procyclic form-specific polypeptide (115 aa).

The first 27 residues, 1 to 27 (MAPRSLYLLAVLLFSANLFAGVGFAAA), serve as a signal peptide directing secretion. The segment at 27–97 (AAEGPEDKGL…PEPEPGAATL (71 aa)) is disordered. Residues 31–52 (PEDKGLTKGGKGKGEKGTKVGA) are compositionally biased toward basic and acidic residues. An N-linked (GlcNAc...) asparagine glycan is attached at asparagine 56. Repeat copies occupy residues 59–60 (DP), 61–62 (DP), 63–64 (EP), 65–66 (EP), 67–68 (EP), 69–70 (EP), 71–72 (EP), 73–74 (EP), 75–76 (EP), 77–78 (EP), 79–80 (EP), 81–82 (EP), 83–84 (EP), 85–86 (EP), 87–88 (EP), 89–90 (EP), and 91–92 (EP). The tract at residues 59–92 (DPDPEPEPEPEPEPEPEPEPEPEPEPEPEPEPEP) is 17 X 2 AA tandem repeats of [DE]-P. Residues 60–90 (PDPEPEPEPEPEPEPEPEPEPEPEPEPEPEP) are compositionally biased toward acidic residues. Residue glycine 93 is the site of GPI-anchor amidated glycine attachment. The propeptide at 94–115 (AATLKSVALPFAIAAAALVAAF) is removed in mature form.

It localises to the cell membrane. In terms of biological role, major surface antigen of procyclic forms. This is Procyclic form-specific polypeptide (PROA) from Trypanosoma brucei brucei.